The primary structure comprises 365 residues: tRNA/tmRNA (uracil-C(5))-methyltransferase (365 aa).

5 residues coordinate S-adenosyl-L-methionine: Gln-189, Tyr-217, Asn-222, Glu-238, and Asp-298. Cys-323 (nucleophile) is an active-site residue. Glu-357 (proton acceptor) is an active-site residue.

This sequence belongs to the class I-like SAM-binding methyltransferase superfamily. RNA M5U methyltransferase family. TrmA subfamily.

It catalyses the reaction uridine(54) in tRNA + S-adenosyl-L-methionine = 5-methyluridine(54) in tRNA + S-adenosyl-L-homocysteine + H(+). It carries out the reaction uridine(341) in tmRNA + S-adenosyl-L-methionine = 5-methyluridine(341) in tmRNA + S-adenosyl-L-homocysteine + H(+). In terms of biological role, dual-specificity methyltransferase that catalyzes the formation of 5-methyluridine at position 54 (m5U54) in all tRNAs, and that of position 341 (m5U341) in tmRNA (transfer-mRNA). The protein is tRNA/tmRNA (uracil-C(5))-methyltransferase of Psychromonas ingrahamii (strain DSM 17664 / CCUG 51855 / 37).